We begin with the raw amino-acid sequence, 359 residues long: 3-dehydroquinate synthase (359 aa).

NAD(+) contacts are provided by residues 106 to 110, 130 to 131, Lys143, Lys152, and 170 to 173; these read GVVGD, TT, and TLQT. Positions 185, 248, and 265 each coordinate Zn(2+).

Belongs to the sugar phosphate cyclases superfamily. Dehydroquinate synthase family. The cofactor is Co(2+). Zn(2+) serves as cofactor. Requires NAD(+) as cofactor.

It is found in the cytoplasm. It carries out the reaction 7-phospho-2-dehydro-3-deoxy-D-arabino-heptonate = 3-dehydroquinate + phosphate. It functions in the pathway metabolic intermediate biosynthesis; chorismate biosynthesis; chorismate from D-erythrose 4-phosphate and phosphoenolpyruvate: step 2/7. Functionally, catalyzes the conversion of 3-deoxy-D-arabino-heptulosonate 7-phosphate (DAHP) to dehydroquinate (DHQ). This is 3-dehydroquinate synthase from Desulforamulus reducens (strain ATCC BAA-1160 / DSM 100696 / MI-1) (Desulfotomaculum reducens).